A 675-amino-acid polypeptide reads, in one-letter code: Vitamin K-dependent protein S (675 aa).

Residues 1 to 24 (MRVLSARFRVLLACLALVIPVSET) form the signal peptide. The propeptide occupies 25–41 (NFLSKERASQVLVRKRR). In terms of domain architecture, Gla spans 42 to 87 (ANTLFEETMKGNLERECIEELCNKEEAREVFENNPETDYFYPKYLG). Glutamate 47, glutamate 48, glutamate 55, glutamate 57, glutamate 60, glutamate 61, glutamate 66, glutamate 67, glutamate 70, glutamate 73, and glutamate 77 each carry 4-carboxyglutamate. Cysteine 58 and cysteine 63 are joined by a disulfide. The segment at 88-116 (CLGAFRVGSFHAARQSANAYPDLRSCVKA) is thrombin-sensitive. One can recognise an EGF-like 1 domain in the interval 117–155 (ISDQCDPIPCNEDGYLACQDGQAAFTCFCKPGWQGDRCQ). 13 disulfides stabilise this stretch: cysteine 121/cysteine 134, cysteine 126/cysteine 143, cysteine 145/cysteine 154, cysteine 161/cysteine 175, cysteine 171/cysteine 184, cysteine 186/cysteine 199, cysteine 205/cysteine 217, cysteine 212/cysteine 226, cysteine 228/cysteine 241, cysteine 247/cysteine 256, cysteine 252/cysteine 265, cysteine 267/cysteine 282, and cysteine 449/cysteine 475. Aspartate 136 carries the (3R)-3-hydroxyaspartate modification. The EGF-like 2; calcium-binding domain maps to 157 to 200 (DVNECKDPSNVNGGCSQICDNTPGSYHCSCKRGFAMLPNKKDCK). The EGF-like 3; calcium-binding domain maps to 201–242 (DLDECALKPSVCGTAVCKNIPGDFECECPDGYRYDPSSKSCK). Residues 243–283 (DVDECSENMCAQLCVNFPGGYSCYCDGKKGFKLAQDQKSCE) enclose the EGF-like 4; calcium-binding domain. Laminin G-like domains lie at 299–475 (LLYL…NKHC) and 484–665 (YYPG…AHSC). N-linked (GlcNAc...) asparagine glycans are attached at residues asparagine 499 and asparagine 509. Cysteines 638 and 665 form a disulfide.

The iron and 2-oxoglutarate dependent 3-hydroxylation of aspartate and asparagine is (R) stereospecific within EGF domains. Plasma.

It is found in the secreted. Anticoagulant plasma protein; it is a cofactor to activated protein C in the degradation of coagulation factors Va and VIIIa. It helps to prevent coagulation and stimulating fibrinolysis. The sequence is that of Vitamin K-dependent protein S (Pros1) from Mus musculus (Mouse).